The following is a 105-amino-acid chain: Mitomycin resistance protein McrB (105 aa).

Functionally, involved in mitomycin resistance. May operate with McrA or may be a type of transcriptional activator protein. This is Mitomycin resistance protein McrB (mcrB) from Streptomyces lavendulae.